The primary structure comprises 344 residues: MDQYSILGRIGEGAHGIVFKAKHIETGETVALKKVALRRLEDGIPNQALREIKALQEIEDNQYVVKLKDVFPHGTGFVLVFEYMLSDLSEVIRNSQRPLTASQVKSYMMMLLKGVAFCHENSIMHRDLKPANLLISSTGHLKIADFGLARLFSNEGDRLYSHQVATRWYRAPELLYGARKYDEGVDLWAVGCIFGELLNNSPLFPGENDIEQLCCVLRVLGTPNQKVWPEITELPDYNKITFKENPPIPLEEIVPDTSPQAVDLLKKFLVYPSKQRISARQALLHPYFFTDPLPAHHSELPIPQRGGKHSRQRMQPPHEFTVDRPLHESVVDPSLIQKHAMSCS.

The region spanning Tyr-4 to Phe-288 is the Protein kinase domain. ATP is bound by residues Ile-10 to Val-18 and Lys-33. Asp-127 acts as the Proton acceptor in catalysis.

This sequence belongs to the protein kinase superfamily. CMGC Ser/Thr protein kinase family. CDC2/CDKX subfamily. As to quaternary structure, monomer. Interacts with tbc1d32.

It is found in the nucleus. The protein resides in the cytoplasm. Its subcellular location is the cell projection. It localises to the cilium. It carries out the reaction L-seryl-[protein] + ATP = O-phospho-L-seryl-[protein] + ADP + H(+). It catalyses the reaction L-threonyl-[protein] + ATP = O-phospho-L-threonyl-[protein] + ADP + H(+). Involved in cell growth. Activates cdk2, a kinase involved in the control of the cell cycle, by phosphorylating residue 'Thr-160'. Required for high-level Shh responses in the developing neural tube. Together with tbc1d32, controls the structure of the primary cilium by coordinating assembly of the ciliary membrane and axoneme, allowing gli2 to be properly activated in response to SHH signaling. The polypeptide is Cyclin-dependent kinase 20 (cdk20) (Danio rerio (Zebrafish)).